A 611-amino-acid polypeptide reads, in one-letter code: Chaperone protein DnaK (611 aa).

A Phosphothreonine; by autocatalysis modification is found at threonine 172. The tract at residues alanine 575 to lysine 611 is disordered. The span at asparagine 596–lysine 611 shows a compositional bias: acidic residues.

The protein belongs to the heat shock protein 70 family.

Functionally, acts as a chaperone. The chain is Chaperone protein DnaK from Shouchella clausii (strain KSM-K16) (Alkalihalobacillus clausii).